The chain runs to 348 residues: Phosphate acyltransferase (348 aa).

Belongs to the PlsX family. Homodimer. Probably interacts with PlsY.

Its subcellular location is the cytoplasm. The enzyme catalyses a fatty acyl-[ACP] + phosphate = an acyl phosphate + holo-[ACP]. It functions in the pathway lipid metabolism; phospholipid metabolism. Its function is as follows. Catalyzes the reversible formation of acyl-phosphate (acyl-PO(4)) from acyl-[acyl-carrier-protein] (acyl-ACP). This enzyme utilizes acyl-ACP as fatty acyl donor, but not acyl-CoA. This chain is Phosphate acyltransferase, found in Oenococcus oeni (strain ATCC BAA-331 / PSU-1).